The following is a 94-amino-acid chain: Small ribosomal subunit protein uS19c (94 aa).

The protein belongs to the universal ribosomal protein uS19 family.

Its subcellular location is the plastid. In terms of biological role, protein S19 forms a complex with S13 that binds strongly to the 16S ribosomal RNA. The protein is Small ribosomal subunit protein uS19c (rps19) of Epifagus virginiana (Beechdrops).